Consider the following 160-residue polypeptide: SsrA-binding protein (160 aa).

Belongs to the SmpB family.

The protein localises to the cytoplasm. Functionally, required for rescue of stalled ribosomes mediated by trans-translation. Binds to transfer-messenger RNA (tmRNA), required for stable association of tmRNA with ribosomes. tmRNA and SmpB together mimic tRNA shape, replacing the anticodon stem-loop with SmpB. tmRNA is encoded by the ssrA gene; the 2 termini fold to resemble tRNA(Ala) and it encodes a 'tag peptide', a short internal open reading frame. During trans-translation Ala-aminoacylated tmRNA acts like a tRNA, entering the A-site of stalled ribosomes, displacing the stalled mRNA. The ribosome then switches to translate the ORF on the tmRNA; the nascent peptide is terminated with the 'tag peptide' encoded by the tmRNA and targeted for degradation. The ribosome is freed to recommence translation, which seems to be the essential function of trans-translation. In Yersinia pseudotuberculosis serotype O:1b (strain IP 31758), this protein is SsrA-binding protein.